Here is a 100-residue protein sequence, read N- to C-terminus: Aspartyl/glutamyl-tRNA(Asn/Gln) amidotransferase subunit C (100 aa).

This sequence belongs to the GatC family. As to quaternary structure, heterotrimer of A, B and C subunits.

It catalyses the reaction L-glutamyl-tRNA(Gln) + L-glutamine + ATP + H2O = L-glutaminyl-tRNA(Gln) + L-glutamate + ADP + phosphate + H(+). The enzyme catalyses L-aspartyl-tRNA(Asn) + L-glutamine + ATP + H2O = L-asparaginyl-tRNA(Asn) + L-glutamate + ADP + phosphate + 2 H(+). Its function is as follows. Allows the formation of correctly charged Asn-tRNA(Asn) or Gln-tRNA(Gln) through the transamidation of misacylated Asp-tRNA(Asn) or Glu-tRNA(Gln) in organisms which lack either or both of asparaginyl-tRNA or glutaminyl-tRNA synthetases. The reaction takes place in the presence of glutamine and ATP through an activated phospho-Asp-tRNA(Asn) or phospho-Glu-tRNA(Gln). The polypeptide is Aspartyl/glutamyl-tRNA(Asn/Gln) amidotransferase subunit C (Staphylococcus haemolyticus (strain JCSC1435)).